The sequence spans 211 residues: Transmembrane protein 247 (211 aa).

2 stretches are compositionally biased toward basic and acidic residues: residues 1–10 and 31–45; these read MAMEDREVME and PEGKPKASLDAEVPK. Residues 1 to 90 are disordered; that stretch reads MAMEDREVME…AGDGPGLESV (90 aa). Residues 63–73 show a composition bias toward pro residues; that stretch reads PGPPRSLPPKS. Positions 119–148 form a coiled coil; it reads KYLHQENERQRQHEEVMEQLQQQQQQQQAL. 2 helical membrane passes run 159 to 179 and 186 to 206; these read LLLPQNQFAMFFYCFIFIHII and VFFLFSKHYLFCLAAILLCLI.

It is found in the membrane. This Mus musculus (Mouse) protein is Transmembrane protein 247 (Tmem247).